Here is a 353-residue protein sequence, read N- to C-terminus: Heterogeneous nuclear ribonucleoproteins A2/B1 (353 aa).

Position 1 is an N-acetylmethionine (Met1). Thr4 carries the post-translational modification Phosphothreonine. The short motif at 9 to 15 (PLERKKR) is the Nuclear localization signal element. RRM domains lie at 21-104 (RKLF…ESGK) and 112-191 (KKLF…LSRQ). Residue Lys22 forms a Glycyl lysine isopeptide (Lys-Gly) (interchain with G-Cter in SUMO2) linkage. At Ser29 the chain carries Phosphoserine. At Arg38 the chain carries Omega-N-methylarginine. Ser85 is modified (phosphoserine). An N6,N6-dimethyllysine; alternate modification is found at Lys104. Lys104 participates in a covalent cross-link: Glycyl lysine isopeptide (Lys-Gly) (interchain with G-Cter in SUMO2); alternate. Residues Lys112, Lys120, and Lys137 each participate in a glycyl lysine isopeptide (Lys-Gly) (interchain with G-Cter in SUMO2) cross-link. Thr140 carries the phosphothreonine modification. Ser149 bears the Phosphoserine mark. Lys152 participates in a covalent cross-link: Glycyl lysine isopeptide (Lys-Gly) (interchain with G-Cter in SUMO2). Thr159 bears the Phosphothreonine mark. Glycyl lysine isopeptide (Lys-Gly) (interchain with G-Cter in SUMO2); alternate cross-links involve residues Lys168 and Lys173. Lys168 and Lys173 each carry N6-acetyllysine; alternate. Residue Thr176 is modified to Phosphothreonine. Lys186 is covalently cross-linked (Glycyl lysine isopeptide (Lys-Gly) (interchain with G-Cter in SUMO2)). 2 positions are modified to phosphoserine: Ser189 and Ser201. The interval 193-353 (MQEVQSSRSG…SGGYGGRSRY (161 aa)) is disordered. The segment covering 202–223 (GRGGNFGFGDSRGGGGNFGPGP) has biased composition (gly residues). At Arg203 the chain carries Asymmetric dimethylarginine; alternate. Position 203 is a dimethylated arginine; alternate (Arg203). Arg203 is subject to Omega-N-methylarginine; alternate. At Ser212 the chain carries Phosphoserine. Arg213 is modified (asymmetric dimethylarginine; alternate). A Dimethylated arginine; alternate modification is found at Arg213. The residue at position 213 (Arg213) is an Omega-N-methylarginine; alternate. Ser225 bears the Phosphoserine mark. Omega-N-methylarginine is present on Arg228. Residues Ser231 and Ser236 each carry the phosphoserine modification. Omega-N-methylarginine is present on Arg238. Ser259 carries the post-translational modification Phosphoserine. Asymmetric dimethylarginine; alternate is present on Arg266. At Arg266 the chain carries Omega-N-methylarginine; alternate. Residues 308–347 (QQPSNYGPMKSGNFGGSRNMGGPYGGGNYGPGGSGGSGGY) are nuclear targeting sequence. The segment covering 320–353 (NFGGSRNMGGPYGGGNYGPGGSGGSGGYGGRSRY) has biased composition (gly residues). Ser324 carries the phosphoserine modification. The residue at position 325 (Arg325) is an Omega-N-methylarginine. Phosphotyrosine is present on Tyr331. Phosphoserine is present on residues Ser341 and Ser344. Phosphotyrosine is present on Tyr347. Arg350 carries the omega-N-methylarginine modification.

As to quaternary structure, identified in the spliceosome C complex. Identified in a IGF2BP1-dependent mRNP granule complex containing untranslated mRNAs. Interacts with IGF2BP1. Interacts with C9orf72. Interacts with DGCR8. Interacts with TARDBP. Interacts with CKAP5. Interacts with PPIA/CYPA. Interacts (via C-terminus) with FAM76B; the interaction results in retention of HNRNPA2B1 in the nucleus and inhibition of the NF-kappa-B-mediated inflammatory pathway. Interacts with NF-kappa-B inhibitors NFKBIA and NFKBIE; the interaction may be mediated by the RRM2 domain of HNRNPA2B1, and HNRNPA2B1 may interact simultaneously with FAM76B and either NFKBIA or NFKBIE to form a complex. Post-translationally, sumoylated in exosomes, promoting miRNAs-binding. In terms of processing, asymmetric dimethylation at Arg-266 constitutes the major methylation site. According to a report, methylation affects subcellular location and promotes nuclear localization. According to another report, methylation at Arg-266 does not influence nucleocytoplasmic shuttling.

The protein resides in the nucleus. The protein localises to the nucleoplasm. It localises to the cytoplasmic granule. Its subcellular location is the secreted. It is found in the extracellular exosome. In terms of biological role, heterogeneous nuclear ribonucleoprotein (hnRNP) that associates with nascent pre-mRNAs, packaging them into hnRNP particles. The hnRNP particle arrangement on nascent hnRNA is non-random and sequence-dependent and serves to condense and stabilize the transcripts and minimize tangling and knotting. Packaging plays a role in various processes such as transcription, pre-mRNA processing, RNA nuclear export, subcellular location, mRNA translation and stability of mature mRNAs. Forms hnRNP particles with at least 20 other different hnRNP and heterogeneous nuclear RNA in the nucleus. Involved in transport of specific mRNAs to the cytoplasm in oligodendrocytes and neurons: acts by specifically recognizing and binding the A2RE (21 nucleotide hnRNP A2 response element) or the A2RE11 (derivative 11 nucleotide oligonucleotide) sequence motifs present on some mRNAs, and promotes their transport to the cytoplasm. Specifically binds single-stranded telomeric DNA sequences, protecting telomeric DNA repeat against endonuclease digestion. Also binds other RNA molecules, such as primary miRNA (pri-miRNAs): acts as a nuclear 'reader' of the N6-methyladenosine (m6A) mark by specifically recognizing and binding a subset of nuclear m6A-containing pri-miRNAs. Binding to m6A-containing pri-miRNAs promotes pri-miRNA processing by enhancing binding of DGCR8 to pri-miRNA transcripts. Involved in miRNA sorting into exosomes following sumoylation, possibly by binding (m6A)-containing pre-miRNAs. Acts as a regulator of efficiency of mRNA splicing, possibly by binding to m6A-containing pre-mRNAs. Plays a role in the splicing of pyruvate kinase PKM by binding repressively to sequences flanking PKM exon 9, inhibiting exon 9 inclusion and resulting in exon 10 inclusion and production of the PKM M2 isoform. The chain is Heterogeneous nuclear ribonucleoproteins A2/B1 (HNRNPA2B1) from Pongo abelii (Sumatran orangutan).